We begin with the raw amino-acid sequence, 397 residues long: Acid extracellular protease (397 aa).

A signal peptide spans 1–17 (MQFSLATLTTLLAFVAA). One can recognise a Peptidase A1 domain in the interval 61-378 (YQVQISLGGQ…DLERDEVSIA (318 aa)). Asp-77 is a catalytic residue. Asn-88 carries an N-linked (GlcNAc...) asparagine glycan. Cys-93 and Cys-100 form a disulfide bridge. Asp-264 is an active-site residue. Residues Cys-303 and Cys-343 are joined by a disulfide bond. N-linked (GlcNAc...) asparagine glycans are attached at residues Asn-310 and Asn-314.

The protein belongs to the peptidase A1 family.

It is found in the secreted. In Yarrowia lipolytica (strain CLIB 122 / E 150) (Yeast), this protein is Acid extracellular protease (AXP1).